The chain runs to 492 residues: Propanoyl-CoA:succinate CoA transferase (492 aa).

260-264 (GVGNI) provides a ligand contact to CoA. E286 serves as the catalytic 5-glutamyl coenzyme A thioester intermediate. 2 residues coordinate CoA: N376 and G380.

Belongs to the acetyl-CoA hydrolase/transferase family.

It carries out the reaction propanoyl-CoA + succinate = propanoate + succinyl-CoA. Catalyzes the transfer of coenzyme A from propionyl-CoA to succinate. Could be part of a pathway that converts succinate to propionate. This is Propanoyl-CoA:succinate CoA transferase from Escherichia coli (strain K12).